A 129-amino-acid chain; its full sequence is uncharacterized protein (129 aa).

This is an uncharacterized protein from Bacillus subtilis (strain 168).